A 492-amino-acid polypeptide reads, in one-letter code: 3,6-anhydro-alpha-L-galactose dehydrogenase (492 aa).

NADP(+) is bound by residues 160–161 (WN), 184–187 (KPSE), and 237–238 (GS). The active-site Proton acceptor is the glutamate 259. Leucine 260 is a binding site for NADP(+). Cysteine 293 serves as the catalytic Nucleophile. Position 394 (glutamate 394) interacts with NADP(+).

The protein belongs to the aldehyde dehydrogenase family.

It carries out the reaction 3,6-anhydro-alpha-L-galactopyranose + NADP(+) + H2O = 3,6-anhydro-L-galactonate + NADPH + 2 H(+). With respect to regulation, significantly inhibited by EDTA. Activity is enhanced by Fe(2+), but is strongly inhibited by Mn(2+), Cu(2+), Zn(2+), Ni(2+) and Co(2+). Functionally, involved in the degradation of 3,6-anhydro-L-galactose, which is the major monomeric sugar of red macroalgae. Catalyzes the oxidation of 3,6-anhydro-L-galactose (AHG) to form 3,6-anhydrogalactonate (AHGA). Shows broad substrate specificity, with maximum activity toward AHG. The enzyme activities toward D-fructose, D-galactose and D-ribose are between 40% and 50% of the maximum, but those toward L-rhamnose, L-glyceraldehyde, D-glyceraldehyde, L-fucose and D-glucose are much lower. This Streptomyces coelicolor (strain ATCC BAA-471 / A3(2) / M145) protein is 3,6-anhydro-alpha-L-galactose dehydrogenase.